The sequence spans 695 residues: C6 finger domain transcription factor nscR (695 aa).

The zn(2)-C6 fungal-type DNA-binding region spans 17–43 (CELCRERKVKCDKLDPCTNCASAGVVC). Residues 101-113 (SMRSSASQSSNQD) show a composition bias toward low complexity. The tract at residues 101–146 (SMRSSASQSSNQDQESRDAIESISNETEDASAPTPDSSRMPLGDGG) is disordered.

The protein localises to the nucleus. Transcription factor that specifically regulates the neosartoricin B biosynthesis gene cluster. The chain is C6 finger domain transcription factor nscR from Arthroderma otae (strain ATCC MYA-4605 / CBS 113480) (Microsporum canis).